Reading from the N-terminus, the 385-residue chain is Lipid-A-disaccharide synthase (385 aa).

This sequence belongs to the LpxB family.

It carries out the reaction a lipid X + a UDP-2-N,3-O-bis[(3R)-3-hydroxyacyl]-alpha-D-glucosamine = a lipid A disaccharide + UDP + H(+). It participates in bacterial outer membrane biogenesis; LPS lipid A biosynthesis. In terms of biological role, condensation of UDP-2,3-diacylglucosamine and 2,3-diacylglucosamine-1-phosphate to form lipid A disaccharide, a precursor of lipid A, a phosphorylated glycolipid that anchors the lipopolysaccharide to the outer membrane of the cell. This is Lipid-A-disaccharide synthase from Xylella fastidiosa (strain M12).